We begin with the raw amino-acid sequence, 173 residues long: Large ribosomal subunit protein uL16 (173 aa).

The protein belongs to the universal ribosomal protein uL16 family.

This chain is Large ribosomal subunit protein uL16, found in Methanosarcina acetivorans (strain ATCC 35395 / DSM 2834 / JCM 12185 / C2A).